The following is a 744-amino-acid chain: Catalase-peroxidase 3 (744 aa).

Residues 106–228 constitute a cross-link (tryptophyl-tyrosyl-methioninium (Trp-Tyr) (with M-254)); sequence WHFAGTYRIG…LAASEMGLIY (123 aa). His-107 serves as the catalytic Proton acceptor. A cross-link (tryptophyl-tyrosyl-methioninium (Tyr-Met) (with W-106)) is located at residues 228–254; sequence YVDPQGPATLPDPLASARDIRETFRRM. His-269 contributes to the heme b binding site.

Belongs to the peroxidase family. Peroxidase/catalase subfamily. In terms of assembly, homodimer or homotetramer. Heme b is required as a cofactor. Post-translationally, formation of the three residue Trp-Tyr-Met cross-link is important for the catalase, but not the peroxidase activity of the enzyme.

It carries out the reaction H2O2 + AH2 = A + 2 H2O. It catalyses the reaction 2 H2O2 = O2 + 2 H2O. Its function is as follows. Bifunctional enzyme with both catalase and broad-spectrum peroxidase activity. The sequence is that of Catalase-peroxidase 3 from Mycolicibacterium smegmatis (strain ATCC 700084 / mc(2)155) (Mycobacterium smegmatis).